Reading from the N-terminus, the 60-residue chain is uncharacterized protein (60 aa).

Residues 14 to 34 (MLFLGTIGLAVVVGGLMAYGY) traverse the membrane as a helical segment. The segment at 38 to 60 (GKTPSSGTSFHTASPSFSSRYRY) is disordered. Residues 40–60 (TPSSGTSFHTASPSFSSRYRY) are compositionally biased toward polar residues.

It is found in the host membrane. This is an uncharacterized protein from Dryophytes versicolor (chameleon treefrog).